A 689-amino-acid polypeptide reads, in one-letter code: Outer spore wall assembly protein SHE10 (689 aa).

A signal peptide spans 1–18 (MKILTKFFLLLVVTTCSL). The disordered stretch occupies residues 259-308 (TKAKSKSKPRVNASASARGNARAGAKAGAKAGTSEISASATADPTTSASA). Over residues 270-308 (NASASARGNARAGAKAGAKAGTSEISASATADPTTSASA) the composition is skewed to low complexity. Residues 406 to 435 (NKTKTVSEVLQNRYKNLNRAIQDINCTCET) are a coiled coil. Positions 610–626 (EQESKQREDSPRMDRDS) are enriched in basic and acidic residues. Residues 610-689 (EQESKQREDS…TVQNNVTLQI (80 aa)) form a disordered region. Polar residues-rich tracts occupy residues 627–637 (TQNVENSNTTT), 655–670 (QNGTNSTEKFSAGPDS), and 677–689 (METTVQNNVTLQI).

Belongs to the SHE10 family. As to quaternary structure, component of the mitochondria-localized RNase mitochondrial RNA-processing (RNase MRP) composed of one single RNA encoded by the NME1 gene and at least 31 proteins. Absent in the nucleus-localized RNase MRP (NuMRP).

It localises to the mitochondrion. Its function is as follows. Involved in spore wall assembly. May be a component of the mitochondrial RNase MRP (MtMRP), a ribonucleoprotein endoribonuclease involved in the cleaving RNA transcripts to generate primers for DNA replication in mitochondria. The chain is Outer spore wall assembly protein SHE10 from Zygosaccharomyces rouxii (strain ATCC 2623 / CBS 732 / NBRC 1130 / NCYC 568 / NRRL Y-229).